The chain runs to 418 residues: Putative ion-transport protein YfeO (418 aa).

The next 12 membrane-spanning stretches (helical) occupy residues 10 to 30 (LLLS…LIVV), 54 to 74 (DSPL…GLVI), 99 to 119 (ALPG…SLGP), 120 to 140 (EHPI…RLLP), 149 to 169 (ILAS…AALI), 186 to 206 (LFAP…FFHP), 223 to 243 (ILSG…AVWC), 258 to 278 (VLVL…GGPV), 300 to 320 (DYFL…ASGF), 322 to 342 (GGRI…LHEH), 343 to 363 (VPAV…VLVV), and 371 to 391 (LFMA…CIVM).

The protein belongs to the chloride channel (TC 2.A.49) family.

It localises to the cell membrane. This Escherichia coli O9:H4 (strain HS) protein is Putative ion-transport protein YfeO.